We begin with the raw amino-acid sequence, 366 residues long: Cell division protein FtsY homolog, chloroplastic (366 aa).

The transit peptide at 1–40 directs the protein to the chloroplast; that stretch reads MATSSAHLSFLAGRISPFSSERIGLFPLRGEFRPRMTRFR. Residues 171 to 178, 254 to 258, and 318 to 321 each bind GTP; these read GVNGGGKT, DTSGR, and TKLD.

Belongs to the GTP-binding SRP family. Monomer. Interacts with FFC/cpSRP54, a component of the cpSRP complex, composed of a FFC/cpSRP54 monomer and a CAO/cpSRP43 dimer. The complex with FFC/cpSRP54 is formed when both proteins are bound with GTP. Expressed in green tissues. Low levels in roots and seeds.

The protein resides in the plastid. It is found in the chloroplast stroma. It localises to the chloroplast thylakoid membrane. In terms of biological role, signal recognition particle receptor protein. Binds GTP specifically. The GTPase activity is inhibited by the N-terminus of the protein until binding to the thylakoid membrane. Activates the GTPase activity of FFC/cpSRP54 when bound to the cpSRP complex. Required for light-harvesting chlorophyll a/b-binding protein (LHCP) integration into thylakoids. Might be also functionally linked to the Sec translocation machinery. The chain is Cell division protein FtsY homolog, chloroplastic (CPFTSY) from Arabidopsis thaliana (Mouse-ear cress).